A 248-amino-acid polypeptide reads, in one-letter code: Stress-related protein (248 aa).

It belongs to the REF/SRPP family.

In Vitis riparia (Frost grape), this protein is Stress-related protein (SRP).